Here is a 269-residue protein sequence, read N- to C-terminus: Hydroxyethylthiazole kinase (269 aa).

Residue methionine 45 participates in substrate binding. Positions 121 and 167 each coordinate ATP. Glycine 194 provides a ligand contact to substrate.

It belongs to the Thz kinase family. Requires Mg(2+) as cofactor.

The enzyme catalyses 5-(2-hydroxyethyl)-4-methylthiazole + ATP = 4-methyl-5-(2-phosphooxyethyl)-thiazole + ADP + H(+). It participates in cofactor biosynthesis; thiamine diphosphate biosynthesis; 4-methyl-5-(2-phosphoethyl)-thiazole from 5-(2-hydroxyethyl)-4-methylthiazole: step 1/1. Its function is as follows. Catalyzes the phosphorylation of the hydroxyl group of 4-methyl-5-beta-hydroxyethylthiazole (THZ). This Bacillus licheniformis (strain ATCC 14580 / DSM 13 / JCM 2505 / CCUG 7422 / NBRC 12200 / NCIMB 9375 / NCTC 10341 / NRRL NRS-1264 / Gibson 46) protein is Hydroxyethylthiazole kinase.